Consider the following 330-residue polypeptide: Lipoyl synthase (330 aa).

Residues Cys-55, Cys-60, Cys-66, Cys-81, Cys-85, Cys-88, and Ser-292 each contribute to the [4Fe-4S] cluster site. The Radical SAM core domain maps to 67 to 281; that stretch reads WEDREATFLI…AEEAREIGFV (215 aa).

The protein belongs to the radical SAM superfamily. Lipoyl synthase family. The cofactor is [4Fe-4S] cluster.

The protein localises to the cytoplasm. The enzyme catalyses [[Fe-S] cluster scaffold protein carrying a second [4Fe-4S](2+) cluster] + N(6)-octanoyl-L-lysyl-[protein] + 2 oxidized [2Fe-2S]-[ferredoxin] + 2 S-adenosyl-L-methionine + 4 H(+) = [[Fe-S] cluster scaffold protein] + N(6)-[(R)-dihydrolipoyl]-L-lysyl-[protein] + 4 Fe(3+) + 2 hydrogen sulfide + 2 5'-deoxyadenosine + 2 L-methionine + 2 reduced [2Fe-2S]-[ferredoxin]. The protein operates within protein modification; protein lipoylation via endogenous pathway; protein N(6)-(lipoyl)lysine from octanoyl-[acyl-carrier-protein]: step 2/2. Functionally, catalyzes the radical-mediated insertion of two sulfur atoms into the C-6 and C-8 positions of the octanoyl moiety bound to the lipoyl domains of lipoate-dependent enzymes, thereby converting the octanoylated domains into lipoylated derivatives. The polypeptide is Lipoyl synthase (Cutibacterium acnes (strain DSM 16379 / KPA171202) (Propionibacterium acnes)).